The sequence spans 520 residues: GMP synthase [glutamine-hydrolyzing] (520 aa).

In terms of domain architecture, Glutamine amidotransferase type-1 spans 12–205 (KIIVLDYGSQ…AISICGARGD (194 aa)). Cys89 acts as the Nucleophile in catalysis. Catalysis depends on residues His179 and Glu181. The 190-residue stretch at 206–395 (WSMDNFIDME…LGMPEEIVWR (190 aa)) folds into the GMPS ATP-PPase domain. 233-239 (SGGVDSS) contributes to the ATP binding site.

As to quaternary structure, homodimer.

The catalysed reaction is XMP + L-glutamine + ATP + H2O = GMP + L-glutamate + AMP + diphosphate + 2 H(+). It participates in purine metabolism; GMP biosynthesis; GMP from XMP (L-Gln route): step 1/1. In terms of biological role, catalyzes the synthesis of GMP from XMP. In Streptococcus pyogenes serotype M1, this protein is GMP synthase [glutamine-hydrolyzing].